The sequence spans 124 residues: Putative C(50) carotenoid beta-cyclase subunit A (124 aa).

3 consecutive transmembrane segments (helical) span residues 1–21 (MIGLSYLLVQVVSFAGILVID), 34–54 (AAALAVTASVALLLTWDVLGV), and 78–98 (FEEVVFLAFLSHLALVCAAGV).

Belongs to the lycopene beta-cyclase family. In terms of assembly, may form a complex with LbtBC.

Its subcellular location is the cell membrane. Its pathway is carotenoid biosynthesis. Functionally, involved in the biosynthesis of C(50) beta-cyclic carotenoids. May have C(50) carotenoid beta-cyclase activity and produce the C(50) beta-cyclic carotenoid C.p.450 from the C(50) carotenoid dihydrobisanhydrobacterioruberin (DH-BABR). This is Putative C(50) carotenoid beta-cyclase subunit A from Dietzia sp. (strain CQ4).